The chain runs to 177 residues: Peptide methionine sulfoxide reductase MsrA 2 (177 aa).

The active site involves Cys12.

This sequence belongs to the MsrA Met sulfoxide reductase family.

The catalysed reaction is L-methionyl-[protein] + [thioredoxin]-disulfide + H2O = L-methionyl-(S)-S-oxide-[protein] + [thioredoxin]-dithiol. It carries out the reaction [thioredoxin]-disulfide + L-methionine + H2O = L-methionine (S)-S-oxide + [thioredoxin]-dithiol. Functionally, has an important function as a repair enzyme for proteins that have been inactivated by oxidation. Catalyzes the reversible oxidation-reduction of methionine sulfoxide in proteins to methionine. This Staphylococcus aureus (strain MRSA252) protein is Peptide methionine sulfoxide reductase MsrA 2.